Consider the following 567-residue polypeptide: PEX5-related protein (567 aa).

Residues 56–105 (SEPVSQPQTKAKKSEPSSKSSSLKKKADGSDLISADAEQRAQALRGPETS) are disordered. Ser146 is modified (phosphoserine). The disordered stretch occupies residues 150–169 (LWSAEHRSQPELSTGKSALN). Ser194, Ser198, and Ser202 each carry phosphoserine. TPR repeat units follow at residues 267 to 300 (WPGA…DPGD), 301 to 334 (AEAW…QPNN), and 336 to 368 (KALM…NPKY). Phosphoserine occurs at positions 386 and 388. TPR repeat units lie at residues 415-448 (PDLQ…RPED), 450-482 (SLWN…QPGF), and 484-516 (RSRY…QRKS).

This sequence belongs to the peroxisomal targeting signal receptor family. In terms of assembly, interacts with RAB8B. Forms an obligate 4:4 complex with HCN2. Interacts with HCN3. Interacts with HCN4 with a 4:4 HCN4:PEX5L stoichiometry; reduces the effects of cAMP on the voltage-dependence and rate of activation of HCN4.

The protein resides in the cytoplasm. It is found in the membrane. Functionally, accessory subunit of hyperpolarization-activated cyclic nucleotide-gated (HCN) channels, regulating their cell-surface expression and cyclic nucleotide dependence. The chain is PEX5-related protein (Pex5l) from Mus musculus (Mouse).